The primary structure comprises 122 residues: Large ribosomal subunit protein uL14 (122 aa).

Belongs to the universal ribosomal protein uL14 family. In terms of assembly, part of the 50S ribosomal subunit. Forms a cluster with proteins L3 and L19. In the 70S ribosome, L14 and L19 interact and together make contacts with the 16S rRNA in bridges B5 and B8.

Binds to 23S rRNA. Forms part of two intersubunit bridges in the 70S ribosome. The protein is Large ribosomal subunit protein uL14 of Gluconobacter oxydans (strain 621H) (Gluconobacter suboxydans).